The chain runs to 201 residues: Potassium-transporting ATPase KdpC subunit (201 aa).

A helical transmembrane segment spans residues 7–27 (PAIVLLLVLTAITGLAYPLAM).

The protein belongs to the KdpC family. As to quaternary structure, the system is composed of three essential subunits: KdpA, KdpB and KdpC.

Its subcellular location is the cell inner membrane. Functionally, part of the high-affinity ATP-driven potassium transport (or Kdp) system, which catalyzes the hydrolysis of ATP coupled with the electrogenic transport of potassium into the cytoplasm. This subunit acts as a catalytic chaperone that increases the ATP-binding affinity of the ATP-hydrolyzing subunit KdpB by the formation of a transient KdpB/KdpC/ATP ternary complex. This is Potassium-transporting ATPase KdpC subunit from Bradyrhizobium diazoefficiens (strain JCM 10833 / BCRC 13528 / IAM 13628 / NBRC 14792 / USDA 110).